Here is a 126-residue protein sequence, read N- to C-terminus: Holo-[acyl-carrier-protein] synthase (126 aa).

D9 and E58 together coordinate Mg(2+).

This sequence belongs to the P-Pant transferase superfamily. AcpS family. Requires Mg(2+) as cofactor.

It is found in the cytoplasm. The catalysed reaction is apo-[ACP] + CoA = holo-[ACP] + adenosine 3',5'-bisphosphate + H(+). Its function is as follows. Transfers the 4'-phosphopantetheine moiety from coenzyme A to a Ser of acyl-carrier-protein. In Photorhabdus laumondii subsp. laumondii (strain DSM 15139 / CIP 105565 / TT01) (Photorhabdus luminescens subsp. laumondii), this protein is Holo-[acyl-carrier-protein] synthase.